The following is a 782-amino-acid chain: MPPRPNKRQQREQEELESLGGPSHEGEVSSEDEVAKRSVKNIAGAGFAALLTPEEDGQDSGDAGSPQPTRKTKKKKKKGPAPPRSQTPVMTEPPQSSRTSPNIPVHPKNEKKATKKAKAREKKAGKDELDKALAELSVNEAEMRKFFGAKVVQANKSTSAGASGSSSRRKPGVLRSNLTHPQPSWWAAKQREGLSIRVLTESETEAKMERQKWDTNEEEKWWTVEYSKKYKSMTMAFMQTVMSGDPEGFWNLLGKLPWHADTLLQLSEVYRHREEYAQAMDFVDRALFTYERSFIGAFTFTSGLNRLDFDHVENRPFFLAIHRQATDLQRRGCVRTAFEFARLLYSLDPWNDPHGALFHLDFLALKAGMSQWLLDVFDLFAARKETEAGVRDSRLNPSLLPGWSYARALALRIDEDANKDGIHTASTSALIEAITSFPSVVPLLADKLDVSLPTSIRSHRNFRIETDSSSLSPSVAALHLLSHLYVQRSFSLWKDAAHCAWFSSTVTSTFSSVSSVLPTTDRHNQFLSLYSNPSPQYSAYRHIMVLEASYRRLFSFIPRHVLNAKSLACDPLPPPTTVTEYNQAFFAGTDDLFALRSRTRQERVADERRLERLIPDAAFRGQLQAFFEAHPNFAERFPGGIVQFAQIAGQLPEDVLEDMMLAEAMGGEGLQDGGMPGQMPGFADFMNEGVDERQEPLAGVDNAPIRLVDHRQENLDAGVGAGADEDDEVEDDDEDEDEEVAPMPVRVLRNLLGRFWGGNTVAEDSSDDEGDRPPPVDDGGVD.

Disordered regions lie at residues 1 to 37 (MPPRPNKRQQREQEELESLGGPSHEGEVSSEDEVAKR), 49 to 128 (ALLT…GKDE), 156 to 180 (KSTSAGASGSSSRRKPGVLRSNLTH), 717 to 745 (AGVGAGADEDDEVEDDDEDEDEEVAPMPV), and 758 to 782 (GNTVAEDSSDDEGDRPPPVDDGGVD). The span at 70–79 (RKTKKKKKKG) shows a compositional bias: basic residues. The segment covering 86–102 (QTPVMTEPPQSSRTSPN) has biased composition (polar residues). A compositionally biased stretch (low complexity) spans 157–166 (STSAGASGSS). Acidic residues predominate over residues 723–740 (ADEDDEVEDDDEDEDEEV).

It localises to the nucleus. It functions in the pathway secondary metabolite biosynthesis; terpenoid biosynthesis. Probable transcription factor; part of the gene cluster that mediates the biosynthesis of clavilactone A, a meroterpenoid that features a unique benzo-fused ten-membered carbocyclic ring unit with an alpha,beta-epoxy-gamma-lactone moiety, forming an intriguing 10/5/3 tricyclic nested skeleton. This chain is Probable transcription factor claV, found in Ampulloclitocybe clavipes (Club foot).